Consider the following 81-residue polypeptide: Small cysteine-rich protein 4 (81 aa).

Positions 1–23 (MDTKVACLLLIILGALTVQGAVS) are cleaved as a signal peptide. Positions 24–25 (GN) are excised as a propeptide.

Belongs to the Cnidaria small cysteine-rich protein (SCRiP) family. beta subfamily. Contains 4 disulfide bonds.

It localises to the secreted. It is found in the nematocyst. In terms of biological role, induces neurotoxic symptoms on zebrafish. Has also been claimed to be implied in calcification, but tests on homolog proteins suggest that proteins of this family have a neurotoxic function and not a calcification function. The protein is Small cysteine-rich protein 4 of Orbicella faveolata (Mountainous star coral).